A 255-amino-acid polypeptide reads, in one-letter code: Imidazole glycerol phosphate synthase subunit HisF (255 aa).

Residues Asp11 and Asp130 contribute to the active site.

Belongs to the HisA/HisF family. Heterodimer of HisH and HisF.

It is found in the cytoplasm. It carries out the reaction 5-[(5-phospho-1-deoxy-D-ribulos-1-ylimino)methylamino]-1-(5-phospho-beta-D-ribosyl)imidazole-4-carboxamide + L-glutamine = D-erythro-1-(imidazol-4-yl)glycerol 3-phosphate + 5-amino-1-(5-phospho-beta-D-ribosyl)imidazole-4-carboxamide + L-glutamate + H(+). Its pathway is amino-acid biosynthesis; L-histidine biosynthesis; L-histidine from 5-phospho-alpha-D-ribose 1-diphosphate: step 5/9. Its function is as follows. IGPS catalyzes the conversion of PRFAR and glutamine to IGP, AICAR and glutamate. The HisF subunit catalyzes the cyclization activity that produces IGP and AICAR from PRFAR using the ammonia provided by the HisH subunit. This Prochlorococcus marinus subsp. pastoris (strain CCMP1986 / NIES-2087 / MED4) protein is Imidazole glycerol phosphate synthase subunit HisF.